A 35-amino-acid chain; its full sequence is Thionin NsW1 (35 aa).

Disulfide bonds link C4–C32, C12–C30, and C16–C26.

Post-translationally, contains 4 disulfide bonds.

It is found in the secreted. In terms of biological role, antimicrobial peptide disrupting membranes. Has antibacterial against Gram-positive bacteria S.aureus (MIC=6.5 uM) and B.subtilis (MIC=3.25 uM) but not against Gram-negative bacterium E.coli. Has antifungal activity against C.albicans (MIC=1.63 uM). The chain is Thionin NsW1 from Nigella sativa (Black cumin).